Here is a 76-residue protein sequence, read N- to C-terminus: Protein sigN132 (76 aa).

Over residues 1 to 13 (MLFESISTLSNLK) the composition is skewed to polar residues. Residues 1 to 33 (MLFESISTLSNLKSASKSSMIASTGSTSSKSSN) form a disordered region. A compositionally biased stretch (low complexity) spans 14-33 (SASKSSMIASTGSTSSKSSN).

This Dictyostelium discoideum (Social amoeba) protein is Protein sigN132.